Consider the following 171-residue polypeptide: Phosphopantetheine adenylyltransferase (171 aa).

Thr-10 lines the substrate pocket. Residues 10–11 (TF) and His-18 contribute to the ATP site. 3 residues coordinate substrate: Lys-42, Thr-74, and Arg-88. Residues 89 to 91 (GLR), Glu-99, and 124 to 130 (WACLSSK) contribute to the ATP site.

This sequence belongs to the bacterial CoaD family. As to quaternary structure, homohexamer. Mg(2+) is required as a cofactor.

It is found in the cytoplasm. The enzyme catalyses (R)-4'-phosphopantetheine + ATP + H(+) = 3'-dephospho-CoA + diphosphate. Its pathway is cofactor biosynthesis; coenzyme A biosynthesis; CoA from (R)-pantothenate: step 4/5. In terms of biological role, reversibly transfers an adenylyl group from ATP to 4'-phosphopantetheine, yielding dephospho-CoA (dPCoA) and pyrophosphate. The chain is Phosphopantetheine adenylyltransferase from Blochmanniella pennsylvanica (strain BPEN).